We begin with the raw amino-acid sequence, 187 residues long: Adenine phosphoribosyltransferase (187 aa).

The protein belongs to the purine/pyrimidine phosphoribosyltransferase family. In terms of assembly, homodimer.

It is found in the cytoplasm. It catalyses the reaction AMP + diphosphate = 5-phospho-alpha-D-ribose 1-diphosphate + adenine. It participates in purine metabolism; AMP biosynthesis via salvage pathway; AMP from adenine: step 1/1. Functionally, catalyzes a salvage reaction resulting in the formation of AMP, that is energically less costly than de novo synthesis. In Yersinia enterocolitica serotype O:8 / biotype 1B (strain NCTC 13174 / 8081), this protein is Adenine phosphoribosyltransferase.